The chain runs to 599 residues: Dictomallein-2 (599 aa).

Positions 1–20 (MKLILIYLILVFNLFNFINC) are cleaved as a signal peptide. In terms of domain architecture, Peptidase M66 spans 145 to 407 (PDVGQDYTLK…QNYFKNSIYY (263 aa)). His298 is a binding site for Zn(2+). Glu299 is an active-site residue. Residues His302 and His308 each contribute to the Zn(2+) site.

It belongs to the dictomallein family. Zn(2+) serves as cofactor.

Its subcellular location is the secreted. In Dictyostelium discoideum (Social amoeba), this protein is Dictomallein-2 (dtmlB).